Consider the following 289-residue polypeptide: Bis(5'-nucleosyl)-tetraphosphatase, symmetrical (289 aa).

It belongs to the Ap4A hydrolase family.

The catalysed reaction is P(1),P(4)-bis(5'-adenosyl) tetraphosphate + H2O = 2 ADP + 2 H(+). Hydrolyzes diadenosine 5',5'''-P1,P4-tetraphosphate to yield ADP. This is Bis(5'-nucleosyl)-tetraphosphatase, symmetrical from Yersinia pseudotuberculosis serotype O:1b (strain IP 31758).